The chain runs to 132 residues: DNA-entry nuclease inhibitor (132 aa).

In terms of assembly, this protein is a subunit of a 75 kDa protein complex, which governs binding and entry of donor DNA. The complex is a tetramer of two subunits of the DNA-entry nuclease and two subunits of a competence-specific protein. Only the complex is able to bind ds- and ss-DNA.

The protein localises to the cell membrane. In terms of biological role, plays a role in the competence of cells to be transformed. It inhibits the activity of the DNA-entry nuclease. This chain is DNA-entry nuclease inhibitor (nin), found in Bacillus subtilis (strain 168).